Consider the following 305-residue polypeptide: Polyamine aminopropyltransferase 2 (305 aa).

The 236-residue stretch at Trp7–Asp242 folds into the PABS domain. Gln36 lines the S-methyl-5'-thioadenosine pocket. Spermidine contacts are provided by His67 and Glu91. S-methyl-5'-thioadenosine is bound by residues Asp111 and Asp143–Gly144. Asp161 acts as the Proton acceptor in catalysis. Pro170 lines the S-methyl-5'-thioadenosine pocket.

It belongs to the spermidine/spermine synthase family. In terms of assembly, homodimer or homotetramer.

It is found in the cytoplasm. It catalyses the reaction S-adenosyl 3-(methylsulfanyl)propylamine + propane-1,3-diamine = norspermidine + S-methyl-5'-thioadenosine + H(+). Involved in the biosynthesis of polyamines which are thought to support the growth of thermophilic microorganisms under high-temperature conditions. It seems that long-chain and branched-chain of polyamines effectively stabilize DNA and RNA, respectively. Catalyzes the irreversible transfer of a propylamine group from the amino donor S-adenosylmethioninamine (decarboxy-AdoMet) to 1,3-diaminopropane to yield sym-norspermidine (bis(3-aminopropyl)amine). It can also synthesize thermospermine from spermidine with a very low activity. This Hyperthermus butylicus (strain DSM 5456 / JCM 9403 / PLM1-5) protein is Polyamine aminopropyltransferase 2.